The sequence spans 1088 residues: DNA polymerase II large subunit (1088 aa).

This sequence belongs to the archaeal DNA polymerase II family. In terms of assembly, heterodimer of a large subunit and a small subunit.

It catalyses the reaction DNA(n) + a 2'-deoxyribonucleoside 5'-triphosphate = DNA(n+1) + diphosphate. The catalysed reaction is Exonucleolytic cleavage in the 3'- to 5'-direction to yield nucleoside 5'-phosphates.. Functionally, possesses two activities: a DNA synthesis (polymerase) and an exonucleolytic activity that degrades single-stranded DNA in the 3'- to 5'-direction. Has a template-primer preference which is characteristic of a replicative DNA polymerase. This chain is DNA polymerase II large subunit (polC), found in Thermoplasma volcanium (strain ATCC 51530 / DSM 4299 / JCM 9571 / NBRC 15438 / GSS1).